A 37-amino-acid chain; its full sequence is M-oxotoxin-Ot2c (37 aa).

Expressed by the venom gland.

Its subcellular location is the secreted. In terms of biological role, disrupts biological membranes, particularly those rich in phosphocholine. Has antimicrobial activity against Gram-negative bacterium E.coli, Gram-positive bacteria B.subtilis and S.aureus, and hemolytic activity against sheep, pig and guinea pig red blood cells. Has insecticidal activity against S.frugiperda ovarian cells by opening non-selective ion channels. Enhances the insecticidal activity of spider venom neurotoxic peptides. The sequence is that of M-oxotoxin-Ot2c from Oxyopes takobius (Lynx spider).